Consider the following 316-residue polypeptide: N-acetyl-gamma-glutamyl-phosphate reductase (316 aa).

Cysteine 136 is a catalytic residue.

Belongs to the NAGSA dehydrogenase family. Type 1 subfamily.

It localises to the cytoplasm. It catalyses the reaction N-acetyl-L-glutamate 5-semialdehyde + phosphate + NADP(+) = N-acetyl-L-glutamyl 5-phosphate + NADPH + H(+). Its pathway is amino-acid biosynthesis; L-arginine biosynthesis; N(2)-acetyl-L-ornithine from L-glutamate: step 3/4. Catalyzes the NADPH-dependent reduction of N-acetyl-5-glutamyl phosphate to yield N-acetyl-L-glutamate 5-semialdehyde. This chain is N-acetyl-gamma-glutamyl-phosphate reductase, found in Xanthomonas campestris pv. campestris (strain 8004).